Here is a 262-residue protein sequence, read N- to C-terminus: Adenosine deaminase RL5 (262 aa).

Cu cation is bound by residues Asn36, Tyr40, Met68, His73, Cys75, Asn114, Cys118, His135, Cys172, Cys175, Cys234, and Cys237.

The protein belongs to the purine nucleoside phosphorylase YfiH/LACC1 family. In terms of assembly, homodimer. The cofactor is Cu cation.

The catalysed reaction is adenosine + phosphate = alpha-D-ribose 1-phosphate + adenine. The enzyme catalyses S-methyl-5'-thioadenosine + phosphate = 5-(methylsulfanyl)-alpha-D-ribose 1-phosphate + adenine. It catalyses the reaction inosine + phosphate = alpha-D-ribose 1-phosphate + hypoxanthine. It carries out the reaction adenosine + H2O + H(+) = inosine + NH4(+). Functionally, purine nucleoside enzyme that catalyzes the phosphorolysis of adenosine and inosine nucleosides, yielding D-ribose 1-phosphate and the respective free bases, adenine and hypoxanthine. Also catalyzes the phosphorolysis of S-methyl-5'-thioadenosine into adenine and S-methyl-5-thio-alpha-D-ribose 1-phosphate. Also has adenosine deaminase activity. Also acts as a multicopper oxidase able to oxidize a wide variety of polyphenols and related compounds in vitro. Displays substrate preference as follows: syringaldazine &gt; 2,6-dimethoxyphenol &gt; veratryl alcohol &gt; guaiacol &gt; tetramethylbenzidine &gt; 4-methoxybenzyl alcohol &gt; 2,2'-azino-bis(3-ethylbenzthiazoline-6-sulfonic acid) (ABTS) &gt;&gt; phenol red &gt; 1-hydroxybenzotriazole. Cannot use 3,4-dimetoxybenzyl alcohol and violuric acid as substrates. As this enzyme is derived from a rumen microbial community, it may have a role in the digestion of complex plant materials such as ryegrass lignin. The sequence is that of Adenosine deaminase RL5 from Unknown prokaryotic organism.